Consider the following 239-residue polypeptide: U2 small nuclear ribonucleoprotein A' (239 aa).

4 LRR repeats span residues Lys-19–Arg-40, Val-42–Lys-63, Arg-64–Val-85, and Asn-88–Ala-109. In terms of domain architecture, LRRCT spans Asn-122–Val-160.

Belongs to the U2 small nuclear ribonucleoprotein A family. As to quaternary structure, belongs to the 40S cdc5-associated complex (or cwf complex), a spliceosome sub-complex reminiscent of a late-stage spliceosome composed of the U2, U5 and U6 snRNAs and at least brr2, cdc5, cwf2/prp3, cwf3/syf1, cwf4/syf3, cwf5/ecm2, spp42/cwf6, cwf7/spf27, cwf8, cwf9, cwf10, cwf11, cwf12, prp45/cwf13, cwf14, cwf15, cwf16, cwf17, cwf18, cwf19, cwf20, cwf21, cwf22, cwf23, cwf24, cwf25, cwf26, cyp7/cwf27, cwf28, cwf29/ist3, lea1, msl1, prp5/cwf1, prp10, prp12/sap130, prp17, prp22, sap61, sap62, sap114, sap145, slu7, smb1, smd1, smd3, smf1, smg1 and syf2.

It is found in the nucleus. Functionally, involved in pre-mRNA splicing. This protein is associated with sn-RNP U2. It helps the A' protein to bind stem loop IV of U2 snRNA. The chain is U2 small nuclear ribonucleoprotein A' (lea1) from Schizosaccharomyces pombe (strain 972 / ATCC 24843) (Fission yeast).